A 32-amino-acid polypeptide reads, in one-letter code: Defensin-3 (32 aa).

Cystine bridges form between C3-C31, C5-C20, and C10-C30.

The protein resides in the secreted. Its function is as follows. Has antibacterial activity against the Gram-negative bacterium E.coli and the Gram-positive bacteria L.monocytogenes and S.aureus. Has antifungal activity against C.albicans. The protein is Defensin-3 of Papio hamadryas (Hamadryas baboon).